The primary structure comprises 270 residues: MPGKHQQFQDPEVGCCGKYFLFGFNIVFWVLGALFLAIGLWAWGEKGVLSNISALTDLGGLDPVWLFVVVGGVMSVLGFAGCIGALRENTFLLKFFSVFLGLIFFLELAAGILAFVFKDWIRDQLNLFINNNVKAYRDDLDLQNLIDFAQEYWSCCGARGPNDWNLNIYFNCTDLNPSRERCGVPFSCCVRDPAEDVLNTQCGYDIRLKLELEQEGSIYTKGCVGQFEKWLQDNLIVVAGVLVGIALLQIFGLCLAQNLVSDIKAVKANW.

Residues Met-1–Tyr-19 lie on the Cytoplasmic side of the membrane. Residues Phe-20–Leu-40 traverse the membrane as a helical segment. Topologically, residues Trp-41 to Pro-63 are extracellular. An N-linked (GlcNAc...) asparagine glycan is attached at Asn-51. Residues Val-64–Gly-84 form a helical membrane-spanning segment. Residues Ala-85–Lys-94 lie on the Cytoplasmic side of the membrane. A helical transmembrane segment spans residues Phe-95 to Phe-115. Residues Val-116–Asn-234 are Extracellular-facing. 4 disulfides stabilise this stretch: Cys-155/Cys-223, Cys-156/Cys-188, Cys-172/Cys-182, and Cys-189/Cys-202. Asn-171 carries N-linked (GlcNAc...) asparagine glycosylation. A helical membrane pass occupies residues Leu-235–Leu-255. Topologically, residues Ala-256 to Trp-270 are cytoplasmic.

It belongs to the tetraspanin (TM4SF) family. Interacts with ADAM10; the interaction influences ADAM10 substrate specificity, endocytosis and turnover.

Its subcellular location is the cell membrane. In terms of biological role, part of TspanC8 subgroup, composed of 6 members that interact with the transmembrane metalloprotease ADAM10. This interaction is required for ADAM10 exit from the endoplasmic reticulum and for enzymatic maturation and trafficking to the cell surface as well as substrate specificity. Different TspanC8/ADAM10 complexes have distinct substrates. Seems to regulate VE-cadherin expression in endothelial cells probably through interaction with ADAM10, promoting leukocyte transmigration. This Mus musculus (Mouse) protein is Tetraspanin-17 (Tspan17).